The sequence spans 231 residues: Enolase-phosphatase E1 (231 aa).

The disordered stretch occupies residues 206-231 (LLERPGNAPQPKHSHPKISSFENFNP).

It belongs to the HAD-like hydrolase superfamily. MasA/MtnC family. In terms of assembly, monomer. Mg(2+) is required as a cofactor.

It carries out the reaction 5-methylsulfanyl-2,3-dioxopentyl phosphate + H2O = 1,2-dihydroxy-5-(methylsulfanyl)pent-1-en-3-one + phosphate. Its pathway is amino-acid biosynthesis; L-methionine biosynthesis via salvage pathway; L-methionine from S-methyl-5-thio-alpha-D-ribose 1-phosphate: step 3/6. It functions in the pathway amino-acid biosynthesis; L-methionine biosynthesis via salvage pathway; L-methionine from S-methyl-5-thio-alpha-D-ribose 1-phosphate: step 4/6. Bifunctional enzyme that catalyzes the enolization of 2,3-diketo-5-methylthiopentyl-1-phosphate (DK-MTP-1-P) into the intermediate 2-hydroxy-3-keto-5-methylthiopentenyl-1-phosphate (HK-MTPenyl-1-P), which is then dephosphorylated to form the acireductone 1,2-dihydroxy-3-keto-5-methylthiopentene (DHK-MTPene). The sequence is that of Enolase-phosphatase E1 from Leptospira borgpetersenii serovar Hardjo-bovis (strain JB197).